The primary structure comprises 130 residues: Small ribosomal subunit protein uS9 (130 aa).

Belongs to the universal ribosomal protein uS9 family.

In Syntrophobacter fumaroxidans (strain DSM 10017 / MPOB), this protein is Small ribosomal subunit protein uS9.